Here is a 447-residue protein sequence, read N- to C-terminus: N-succinylarginine dihydrolase (447 aa).

Substrate-binding positions include 19 to 28 (AGLSFGNEAS), asparagine 110, and 137 to 138 (HR). Glutamate 174 is an active-site residue. Arginine 214 provides a ligand contact to substrate. Histidine 250 is an active-site residue. Residues aspartate 252 and asparagine 365 each coordinate substrate. Cysteine 371 functions as the Nucleophile in the catalytic mechanism.

It belongs to the succinylarginine dihydrolase family. Homodimer.

The enzyme catalyses N(2)-succinyl-L-arginine + 2 H2O + 2 H(+) = N(2)-succinyl-L-ornithine + 2 NH4(+) + CO2. The protein operates within amino-acid degradation; L-arginine degradation via AST pathway; L-glutamate and succinate from L-arginine: step 2/5. Catalyzes the hydrolysis of N(2)-succinylarginine into N(2)-succinylornithine, ammonia and CO(2). In Acinetobacter baumannii (strain ATCC 17978 / DSM 105126 / CIP 53.77 / LMG 1025 / NCDC KC755 / 5377), this protein is N-succinylarginine dihydrolase.